A 682-amino-acid chain; its full sequence is Tetratricopeptide repeat protein 39B (682 aa).

TPR repeat units lie at residues 393-426 (SLVL…QEEW) and 626-659 (PFTL…YKDY).

This sequence belongs to the TTC39 family.

Functionally, regulates high density lipoprotein (HDL) cholesterol metabolism by promoting the ubiquitination and degradation of the oxysterols receptors LXR (NR1H2 and NR1H3). The chain is Tetratricopeptide repeat protein 39B from Homo sapiens (Human).